Here is a 426-residue protein sequence, read N- to C-terminus: D-tagatose-1,6-bisphosphate aldolase subunit KbaZ (426 aa).

This sequence belongs to the GatZ/KbaZ family. KbaZ subfamily. Forms a complex with KbaY.

It functions in the pathway carbohydrate metabolism; D-tagatose 6-phosphate degradation; D-glyceraldehyde 3-phosphate and glycerone phosphate from D-tagatose 6-phosphate: step 2/2. Component of the tagatose-1,6-bisphosphate aldolase KbaYZ that is required for full activity and stability of the Y subunit. Could have a chaperone-like function for the proper and stable folding of KbaY. When expressed alone, KbaZ does not show any aldolase activity. In Escherichia coli (strain K12 / MC4100 / BW2952), this protein is D-tagatose-1,6-bisphosphate aldolase subunit KbaZ.